Here is a 274-residue protein sequence, read N- to C-terminus: Putative deoxyribonuclease TATDN1 homolog (274 aa).

Residues E105, H139, H162, and D208 each coordinate a divalent metal cation.

The protein belongs to the metallo-dependent hydrolases superfamily. TatD-type hydrolase family. A divalent metal cation serves as cofactor.

The protein resides in the nucleus. In terms of biological role, putative deoxyribonuclease. This Enterocytozoon bieneusi (strain H348) (Microsporidian parasite) protein is Putative deoxyribonuclease TATDN1 homolog.